A 103-amino-acid polypeptide reads, in one-letter code: MMTNQRIRIRLKAYDHKLLDQSTSEIVMTAKKTGARVAGPIPLPTKIHRYTVLRSPHVDKKSREQFEIRVHKRLIDILEPTQQTVDSLMKLDLSAGVDVEIKL.

The protein belongs to the universal ribosomal protein uS10 family. In terms of assembly, part of the 30S ribosomal subunit.

Involved in the binding of tRNA to the ribosomes. The polypeptide is Small ribosomal subunit protein uS10 (Syntrophobacter fumaroxidans (strain DSM 10017 / MPOB)).